The primary structure comprises 165 residues: Putative protein FAM86C1P (165 aa).

Belongs to the class I-like SAM-binding methyltransferase superfamily. EEF2KMT family. Interacts with EEF2KMT.

The protein is Putative protein FAM86C1P of Homo sapiens (Human).